The sequence spans 140 residues: uncharacterized protein (140 aa).

The span at 1 to 19 (MGLCGSKTQPMPSQTTTVA) shows a compositional bias: polar residues. The segment at 1–140 (MGLCGSKTQP…ERERENMIYD (140 aa)) is disordered. A lipid anchor (N-myristoyl glycine) is attached at G2. C4 is lipidated: S-palmitoyl cysteine. The segment covering 27–40 (INRDTVKSKQELRH) has biased composition (basic and acidic residues). A compositionally biased stretch (basic residues) spans 41–51 (KEKKDKKKKTQ). Basic and acidic residues predominate over residues 73–140 (DPSKNKVSPK…ERERENMIYD (68 aa)).

To S.pombe new13. In terms of processing, myristoylated. Post-translationally, the N-myristoylated protein is further palmitoylated by ERF2, PFA4 and slightly by PFA5, but not by PFA3.

The protein localises to the cytoplasm. Its subcellular location is the cytosol. This is an uncharacterized protein from Saccharomyces cerevisiae (strain ATCC 204508 / S288c) (Baker's yeast).